We begin with the raw amino-acid sequence, 523 residues long: Cytoplasmic dynein 1 light intermediate chain 1 (523 aa).

Positions 1–45 (MAAVGRVGSFGSSPPGLASTYASGPLANELASGSGGPAAGDDEDG) are disordered. Residue 74 to 81 (GEDGAGKT) coordinates ATP. Residue Ser-207 is modified to Phosphoserine. Position 213 is a phosphothreonine (Thr-213). 2 disordered regions span residues 387-434 (PPTA…DPNM) and 457-523 (GSPG…GEAS). Phosphoserine is present on residues Ser-398 and Ser-405. Thr-408 carries the phosphothreonine modification. Phosphoserine occurs at positions 412, 419, 421, and 427. Residues 412–421 (SVSSNVASVS) are compositionally biased toward low complexity. Residues 458–473 (SPGGPGVGGSPGGGAA) show a composition bias toward gly residues. A compositionally biased stretch (low complexity) spans 474–483 (GASTSLPPSA). Residues Ser-486 and Ser-510 each carry the phosphoserine modification. Thr-512 and Thr-513 each carry phosphothreonine. Ser-516 carries the post-translational modification Phosphoserine.

It belongs to the dynein light intermediate chain family. As to quaternary structure, homodimer. The cytoplasmic dynein 1 complex consists of two catalytic heavy chains (HCs) and a number of non-catalytic subunits presented by intermediate chains (ICs), light intermediate chains (LICs) and light chains (LCs); the composition seems to vary in respect to the IC, LIC and LC composition. The heavy chain homodimer serves as a scaffold for the probable homodimeric assembly of the respective non-catalytic subunits. The ICs and LICs bind directly to the HC dimer and the LCs assemble on the IC dimer. Self-associates. Interacts with DYNC1H1; DYNC1LI1 and DYNC1LI2 bind mutually exclusive to DYNC1H1. Interacts with PCNT. Forms a complex with RAB11FIP3 and RAB11A1; the interaction between DYNC1LI1 and RAB11FIP3 is direct and induces DYNC1LI1 localization onto endosomal membrane; the complex regulates endocytic trafficking. Interacts with RUFY3. Phosphorylated during mitosis but not in interphase.

It localises to the cytoplasm. The protein localises to the chromosome. It is found in the centromere. The protein resides in the kinetochore. Its subcellular location is the cytoskeleton. It localises to the spindle pole. The protein localises to the recycling endosome membrane. Acts as one of several non-catalytic accessory components of the cytoplasmic dynein 1 complex that are thought to be involved in linking dynein to cargos and to adapter proteins that regulate dynein function. Cytoplasmic dynein 1 acts as a motor for the intracellular retrograde motility of vesicles and organelles along microtubules. May play a role in binding dynein to membranous organelles or chromosomes. Probably involved in the microtubule-dependent transport of pericentrin. Is required for progress through the spindle assembly checkpoint. The phosphorylated form appears to be involved in the selective removal of MAD1L1 and MAD1L2 but not BUB1B from kinetochores. Forms a functional Rab11/RAB11FIP3/dynein complex onto endosomal membrane that regulates the movement of peripheral sorting endosomes (SE) along microtubule tracks toward the microtubule organizing center/centrosome, generating the endosomal recycling compartment (ERC). In Rattus norvegicus (Rat), this protein is Cytoplasmic dynein 1 light intermediate chain 1 (Dync1li1).